We begin with the raw amino-acid sequence, 122 residues long: Large ribosomal subunit protein uL18 (122 aa).

The interval 1 to 20 (MFKKVSKNANRLSRHQRVRN) is disordered.

Belongs to the universal ribosomal protein uL18 family. Part of the 50S ribosomal subunit; part of the 5S rRNA/L5/L18/L25 subcomplex. Contacts the 5S and 23S rRNAs.

Functionally, this is one of the proteins that bind and probably mediate the attachment of the 5S RNA into the large ribosomal subunit, where it forms part of the central protuberance. This Alkaliphilus oremlandii (strain OhILAs) (Clostridium oremlandii (strain OhILAs)) protein is Large ribosomal subunit protein uL18.